We begin with the raw amino-acid sequence, 231 residues long: 5'-methylthioadenosine/S-adenosylhomocysteine nucleosidase (231 aa).

The active-site Proton acceptor is E12. Residues G78, M153, and 174-175 contribute to the substrate site; that span reads ME. D198 functions as the Proton donor in the catalytic mechanism.

Belongs to the PNP/UDP phosphorylase family. MtnN subfamily.

The catalysed reaction is S-adenosyl-L-homocysteine + H2O = S-(5-deoxy-D-ribos-5-yl)-L-homocysteine + adenine. The enzyme catalyses S-methyl-5'-thioadenosine + H2O = 5-(methylsulfanyl)-D-ribose + adenine. It catalyses the reaction 5'-deoxyadenosine + H2O = 5-deoxy-D-ribose + adenine. Its pathway is amino-acid biosynthesis; L-methionine biosynthesis via salvage pathway; S-methyl-5-thio-alpha-D-ribose 1-phosphate from S-methyl-5'-thioadenosine (hydrolase route): step 1/2. Its function is as follows. Catalyzes the irreversible cleavage of the glycosidic bond in both 5'-methylthioadenosine (MTA) and S-adenosylhomocysteine (SAH/AdoHcy) to adenine and the corresponding thioribose, 5'-methylthioribose and S-ribosylhomocysteine, respectively. Also cleaves 5'-deoxyadenosine, a toxic by-product of radical S-adenosylmethionine (SAM) enzymes, into 5-deoxyribose and adenine. The polypeptide is 5'-methylthioadenosine/S-adenosylhomocysteine nucleosidase (Bacillus cereus (strain G9842)).